The following is a 496-amino-acid chain: Apolipoprotein N-acyltransferase (496 aa).

Helical transmembrane passes span 6 to 26 (IICL…FFIP), 50 to 70 (FGYL…SIGV), 77 to 97 (FWWA…FFIS), 114 to 134 (LIFC…LTGL), 148 to 168 (ILIQ…VIYI), and 183 to 203 (LKIL…YGAV). The region spanning 220–464 (VQPSIPQTAK…QGLIPQKLTT (245 aa)) is the CN hydrolase domain. The active-site Proton acceptor is the Glu259. The active site involves Lys322. Cys372 acts as the Nucleophile in catalysis. A helical transmembrane segment spans residues 474-494 (FAMLLSIVFIILIHYLLSLIF).

It belongs to the CN hydrolase family. Apolipoprotein N-acyltransferase subfamily.

The protein resides in the cell inner membrane. It carries out the reaction N-terminal S-1,2-diacyl-sn-glyceryl-L-cysteinyl-[lipoprotein] + a glycerophospholipid = N-acyl-S-1,2-diacyl-sn-glyceryl-L-cysteinyl-[lipoprotein] + a 2-acyl-sn-glycero-3-phospholipid + H(+). It functions in the pathway protein modification; lipoprotein biosynthesis (N-acyl transfer). Functionally, catalyzes the phospholipid dependent N-acylation of the N-terminal cysteine of apolipoprotein, the last step in lipoprotein maturation. The protein is Apolipoprotein N-acyltransferase of Rickettsia prowazekii (strain Madrid E).